The following is a 379-amino-acid chain: Very late expression factor 1 (379 aa).

In terms of domain architecture, Tyr recombinase spans 169-348; it reads VIDTILNFIN…YNIGLDETSS (180 aa). Active-site residues include Arg210, Lys239, Arg303, and His326. Tyr335 serves as the catalytic O-(3'-phospho-DNA)-tyrosine intermediate. Residues 346-358 show a composition bias toward acidic residues; that stretch reads TSSEEENNNDDDD. Residues 346–379 form a disordered region; it reads TSSEEENNNDDDDAQHNRNSSGSSGESLLYYRNE. The span at 362–379 shows a compositional bias: low complexity; the sequence is NRNSSGSSGESLLYYRNE.

The protein belongs to the 'phage' integrase family.

Functionally, plays a role in nucleocapsid assembly and serves an essential function during the final stages of the DNA packaging process. Participates in the processing of branched DNA molecules at the late stages of viral genome replication. This Lepidoptera (butterflies and moths) protein is Very late expression factor 1 (VLF-1).